The chain runs to 393 residues: Venom metalloproteinase BumaMPs1 (393 aa).

The N-terminal stretch at 1-15 (MFVHLLVLLFAAVEA) is a signal peptide. A glycan (N-linked (GlcNAc...) asparagine) is linked at Asn158. The region spanning 167-377 (KCVKIEYVFV…RVEELITRRK (211 aa)) is the Peptidase M12B domain. His323 provides a ligand contact to Zn(2+). Glu324 is an active-site residue. Positions 327 and 333 each coordinate Zn(2+). The segment at 378–393 (INHCIVETCDGKRKRN) is disintegrin-like domain.

This sequence belongs to the venom metalloproteinase (M12B) family. Zn(2+) serves as cofactor. In terms of processing, contains several disulfide bonds. In terms of tissue distribution, expressed by the venom gland.

The protein resides in the secreted. Metalloprotease. This is Venom metalloproteinase BumaMPs1 from Olivierus martensii (Manchurian scorpion).